The sequence spans 99 residues: Malonate decarboxylase acyl carrier protein (99 aa).

O-(phosphoribosyl dephospho-coenzyme A)serine is present on S25.

It belongs to the MdcC family. Post-translationally, covalently binds the prosthetic group of malonate decarboxylase.

It localises to the cytoplasm. In terms of biological role, subunit of malonate decarboxylase, it is an acyl carrier protein to which acetyl and malonyl thioester residues are bound via a 2'-(5''-phosphoribosyl)-3'-dephospho-CoA prosthetic group and turn over during the catalytic mechanism. This chain is Malonate decarboxylase acyl carrier protein, found in Stutzerimonas stutzeri (strain A1501) (Pseudomonas stutzeri).